Here is a 623-residue protein sequence, read N- to C-terminus: Heterogeneous nuclear ribonucleoprotein Q (623 aa).

The residue at position 2 (Ala2) is an N-acetylalanine. Position 159 is a phosphoserine (Ser159). RRM domains lie at 162–241 (TEIF…ISVA), 243–325 (NRLF…WADP), and 338–408 (KVLF…FAKP). Residue Lys168 forms a Glycyl lysine isopeptide (Lys-Gly) (interchain with G-Cter in SUMO2) linkage. An N6-acetyllysine modification is found at Lys221. An N6-acetyllysine modification is found at Lys363. Tyr373 bears the Phosphotyrosine mark. Residues 400–561 (NIEIVFAKPP…GARGGRGGNV (162 aa)) form an interaction with APOBEC1 region. Residue Arg444 is modified to Asymmetric dimethylarginine; by PRMT1; alternate. An Omega-N-methylarginine; by PRMT1; alternate modification is found at Arg444. 6 tandem repeats follow at residues 448-450 (RGG), 451-453 (RGG), 460-464 (YYGYE), 469-472 (YYGY), 478-480 (RGG), and 485-488 (YYGY). Residues 448–559 (RGGRGGYGYP…VRGARGGRGG (112 aa)) form an 8 X 3 AA repeats of R-G-G region. Residues 460 to 488 (YYGYEDYYDYYGYDYHNYRGGYEDPYYGY) form a 3 X 4 AA repeats of Y-Y-G-Y region. The residue at position 496 (Arg496) is an Omega-N-methylarginine; by PRMT1. Residues 497-623 (GRGGRGARGA…YQDTFGQQWK (127 aa)) form a disordered region. Residues 498 to 500 (RGG) form a 1-4 repeat. Positions 504–522 (RGAAPSRGRGAAPPRGRAG) are enriched in low complexity. Arg510 carries the post-translational modification Asymmetric dimethylarginine; by PRMT1. An Asymmetric dimethylarginine; by PRMT1; alternate modification is found at Arg518. Arg518 bears the Omega-N-methylarginine; by PRMT1; alternate mark. Positions 518–549 (RGRAGYSQRGGPGSARGVRGARGGAQQQRGRG) are interaction with SMN. At Arg526 the chain carries Asymmetric dimethylarginine; alternate. Arg526 bears the Omega-N-methylarginine; alternate mark. The 1-5 repeat unit spans residues 526–528 (RGG). Arg536 and Arg539 each carry asymmetric dimethylarginine; by PRMT1; alternate. Arg536 and Arg539 each carry omega-N-methylarginine; by PRMT1; alternate. A run of 3 repeats spans residues 539 to 541 (RGG), 554 to 556 (RGG), and 557 to 559 (RGG). Positions 550-562 (VRGARGGRGGNVG) are enriched in gly residues. A Bipartite nuclear localization signal motif is present at residues 564-578 (KRKADGYNQPDTKRR). The segment covering 580 to 595 (TNNQNWGSQPIAQQPL) has biased composition (polar residues). Residue Ser587 is modified to Phosphoserine. Lys607 is covalently cross-linked (Glycyl lysine isopeptide (Lys-Gly) (interchain with G-Cter in SUMO2)). Positions 611 to 623 (QEFYQDTFGQQWK) are enriched in polar residues.

As to quaternary structure, identified in the spliceosome C complex. Component of the coding region determinant (CRD)-mediated complex, composed of DHX9, HNRNPU, IGF2BP1, SYNCRIP and YBX1. Identified in a mRNP complex, at least composed of DHX9, DDX3X, ELAVL1, HNRNPU, IGF2BP1, ILF3, PABPC1, PCBP2, PTBP2, STAU1, STAU2, SYNCRIP and YBX1. Identified in a mRNP granule complex, at least composed of ACTB, ACTN4, DHX9, ERG, HNRNPA1, HNRNPA2B1, HNRNPAB, HNRNPD, HNRNPL, HNRNPR, HNRNPU, HSPA1, HSPA8, IGF2BP1, ILF2, ILF3, NCBP1, NCL, PABPC1, PABPC4, PABPN1, RPLP0, RPS3, RPS3A, RPS4X, RPS8, RPS9, SYNCRIP, YBX1 and untranslated mRNAs. Interacts with GTPBP1. Isoform 1 is a component of the APOB mRNA editosome complex. Isoform 1 interacts with APOBEC1 and A1CF. Part of a complex associated with the FOS mCRD domain and consisting of PABPC1, PAIP1, CSDE1/UNR, HNRPD and SYNCRIP. Isoform 2 interacts with HNRPR. Interacts with POLR2A hyperphosphorylated C-terminal domain. Interacts with HABP4. Identified in a histone pre-mRNA complex, at least composed of ERI1, LSM11, SLBP, SNRPB, SYNCRIP and YBX1. Isoform 1 and isoform 2 interact with SMN. Isoform 2 interacts through its C-terminal domain with SYT7, SYT8 and SYT9. The non-phosphorylated and phosphorylated forms are colocalized with PAIP1 in polysomes. Phosphorylated on tyrosine. The membrane-bound form found in microsomes is phosphorylated in vitro by insulin receptor tyrosine kinase (INSR). Phosphorylation is inhibited upon binding to RNA, whereas the cytoplasmic form is poorly phosphorylated. In terms of tissue distribution, ubiquitous. Detected in heart, brain, spleen, lung, liver, skeletal muscle, adipocytes, kidney and testis.

Its subcellular location is the nucleus. It localises to the nucleoplasm. The protein localises to the microsome. The protein resides in the cytoplasm. Heterogeneous nuclear ribonucleoprotein (hnRNP) implicated in mRNA processing mechanisms. Component of the CRD-mediated complex that promotes MYC mRNA stability. Isoform 1 and isoform 2 are associated in vitro with pre-mRNA, splicing intermediates and mature mRNA protein complexes. Isoform 1 binds to apoB mRNA AU-rich sequences. Isoform 1 is part of the APOB mRNA editosome complex and may modulate the postranscriptional C to U RNA-editing of the APOB mRNA through either by binding to A1CF (APOBEC1 complementation factor), to APOBEC1 or to RNA itself. May be involved in translationally coupled mRNA turnover. Implicated with other RNA-binding proteins in the cytoplasmic deadenylation/translational and decay interplay of the FOS mRNA mediated by the major coding-region determinant of instability (mCRD) domain. Interacts in vitro preferentially with poly(A) and poly(U) RNA sequences. Isoform 2 may be involved in cytoplasmic vesicle-based mRNA transport through interaction with synaptotagmins. The polypeptide is Heterogeneous nuclear ribonucleoprotein Q (Syncrip) (Mus musculus (Mouse)).